The chain runs to 145 residues: Ribonuclease P protein component (145 aa).

Low complexity predominate over residues 120–130 (LPAAPGTMPPA). Residues 120 to 145 (LPAAPGTMPPARTMHPSSLSPTEPDL) form a disordered region. Positions 134–145 (HPSSLSPTEPDL) are enriched in polar residues.

It belongs to the RnpA family. In terms of assembly, consists of a catalytic RNA component (M1 or rnpB) and a protein subunit.

It catalyses the reaction Endonucleolytic cleavage of RNA, removing 5'-extranucleotides from tRNA precursor.. Its function is as follows. RNaseP catalyzes the removal of the 5'-leader sequence from pre-tRNA to produce the mature 5'-terminus. It can also cleave other RNA substrates such as 4.5S RNA. The protein component plays an auxiliary but essential role in vivo by binding to the 5'-leader sequence and broadening the substrate specificity of the ribozyme. This chain is Ribonuclease P protein component, found in Xanthomonas oryzae pv. oryzae (strain MAFF 311018).